Here is a 203-residue protein sequence, read N- to C-terminus: Nucleoside triphosphate pyrophosphatase (203 aa).

The active-site Proton acceptor is the D80.

It belongs to the Maf family. Requires a divalent metal cation as cofactor.

The protein localises to the cytoplasm. The enzyme catalyses a ribonucleoside 5'-triphosphate + H2O = a ribonucleoside 5'-phosphate + diphosphate + H(+). It catalyses the reaction a 2'-deoxyribonucleoside 5'-triphosphate + H2O = a 2'-deoxyribonucleoside 5'-phosphate + diphosphate + H(+). Functionally, nucleoside triphosphate pyrophosphatase. May have a dual role in cell division arrest and in preventing the incorporation of modified nucleotides into cellular nucleic acids. The chain is Nucleoside triphosphate pyrophosphatase from Gluconobacter oxydans (strain 621H) (Gluconobacter suboxydans).